The primary structure comprises 192 residues: Vascular endothelial growth factor A (192 aa).

The N-terminal stretch at 1 to 26 is a signal peptide; that stretch reads MNFLLTWIHWGLAALLYFHNAKVLQA. Intrachain disulfides connect Cys-52/Cys-94, Cys-83/Cys-128, and Cys-87/Cys-130. N-linked (GlcNAc...) asparagine glycosylation is present at Asn-101.

It belongs to the PDGF/VEGF growth factor family. In terms of assembly, homodimer; disulfide-linked. Also found as heterodimer with PGF. Interacts with FLT1/VEGFR1 and KDR/VEGFR2 receptors, heparan sulfate and heparin. As to expression, expressed by the venom gland, and probably other tissues.

The protein localises to the secreted. In terms of biological role, growth factor active in angiogenesis, vasculogenesis and endothelial cell growth. Induces endothelial cell proliferation, promotes cell migration, inhibits apoptosis and induces permeabilization of blood vessels. This chain is Vascular endothelial growth factor A, found in Agkistrodon piscivorus piscivorus (Eastern cottonmouth).